The primary structure comprises 634 residues: Calcium up-regulated protein D (634 aa).

A disordered region spans residues 1-23 (MINIEDISKSSNQSEEKQLKSTS). Ricin B-type lectin domains are found at residues 27-146 (KPKY…WTTF) and 117-250 (PGNG…WGIN).

The protein belongs to the cup family.

It localises to the cytoplasm. The protein localises to the membrane. Its function is as follows. May play an important role in stabilizing and/or regulating the cell membrane during Ca(2+) stress or certain stages of development. The protein is Calcium up-regulated protein D (cupD) of Dictyostelium discoideum (Social amoeba).